The following is a 1325-amino-acid chain: Sperm-specific sodium:proton exchanger (1325 aa).

Residues 1–29 (MKKRVVKLRELVPAVAALAVAVLIQSATG) form the signal peptide. Residues 28–68 (TGSSGGSGHTPTTQATHADDHDLTTHNGTEEHDDGHDDGHD) form a disordered region. At 30–76 (SSGGSGHTPTTQATHADDHDLTTHNGTEEHDDGHDDGHDDLHAHAPK) the chain is on the extracellular side. Residues 44 to 68 (HADDHDLTTHNGTEEHDDGHDDGHD) show a composition bias toward basic and acidic residues. A 1,2-diacylglycero-3-phosphate is bound at residue His73. A helical transmembrane segment spans residues 77-96 (VIVFISGSCLFGAISRSLFK). Over 97–101 (KLPIP) the chain is Cytoplasmic. A helical transmembrane segment spans residues 102–119 (YTVVLLILGAILGVVASN). Residues 120–135 (VPLVEEHTRDVAHMDP) are Extracellular-facing. A helical transmembrane segment spans residues 136-152 (HVLLQIFLPVLIFESAF). Residues 153–162 (AMDVHTFMRS) are Cytoplasmic-facing. Residues 163-188 (FSQVCILALFGLVVASVLTAVLAMNL) traverse the membrane as a helical segment. The interval 163–250 (FSQVCILALF…AIVIFNVFMK (88 aa)) is transport core domain. Over 189-194 (FNYNWN) the chain is Extracellular. Residues 195-220 (FSEAMMFGAIMSATDPVAVVALLKDL) traverse the membrane as a helical segment. Topologically, residues 221 to 223 (GAS) are cytoplasmic. Residues 224 to 249 (KQLGTIIEGESLLNDGCAIVIFNVFM) form a helical membrane-spanning segment. The Essential for sodium:proton exchange signature appears at 237 to 238 (ND). Residues 250–260 (KMVFFPQLTST) lie on the Extracellular side of the membrane. The chain crosses the membrane as a helical span at residues 261 to 292 (VGQNVLYFLQVAVAGPLWGYAVAKVTVFFLSH). Over 293 to 296 (IFND) the chain is Cytoplasmic. Residues 297–319 (ALVEITITLAATYLTYYIGDIWL) traverse the membrane as a helical segment. The Extracellular segment spans residues 320–322 (EVS). Residues 323–336 (GVLAVVVLGLIVNA) form a helical membrane-spanning segment. Over 337 to 343 (EKTSISP) the chain is Cytoplasmic. The chain crosses the membrane as a helical span at residues 344 to 377 (EVEVFLHRFWEMLAYLANTLIFMMVGVVVTQKAL). Over 378 to 382 (VAVDK) the chain is Extracellular. A helical membrane pass occupies residues 383–412 (MDWFYLIILYLAITIIRGMVISLFSPILSR). The transport core domain stretch occupies residues 383–481 (MDWFYLIILY…TTIQTLLRIL (99 aa)). Topologically, residues 413–418 (IGYGLT) are cytoplasmic. Residues 419 to 446 (WRNAVIMTWGGLRGAVGLALALVVENLA) traverse the membrane as a helical segment. The Extracellular portion of the chain corresponds to 447–450 (GNDV). A helical membrane pass occupies residues 451-481 (IGSKFLFHTAGIVVLTLVINATTIQTLLRIL). Topologically, residues 482 to 677 (GMSDISIPKR…GKLMYKICHH (196 aa)) are cytoplasmic. The tract at residues 575 to 620 (FADMMEEARLRMLKAEKISYWKQFEHGMLAREALRLLVQHAEVAAD) is interacts with the S4 segment of voltage sensor domain. The tract at residues 605–620 (REALRLLVQHAEVAAD) is interacts with the transport core domain; can lock the transporter in the inward conformation. Residues 678–708 (MAFEVTINIAIVLNIVPIIMEFVVQDKMASV) traverse the membrane as a helical segment. The Extracellular portion of the chain corresponds to 709–724 (STMAAPGSTVSSEPSS). Residues 725–752 (LQKIEDALRISNYVFFVIYAIEAIVKIL) form a helical membrane-spanning segment. The Cytoplasmic segment spans residues 753-760 (GLGRHYIV). Residues 761 to 784 (SHWNKFDAFILVVALVDIIIAETL) form a helical membrane-spanning segment. Over 785–795 (LKGSITINLSS) the chain is Extracellular. Residues 796-822 (IKVVKLFRLLRGLRMLRLTKALIPKLI) form a helical membrane-spanning segment. Residues 796–857 (IKVVKLFRLL…EEVGKIIDRM (62 aa)) are S4 segment of voltage sensor domain. The Cytoplasmic portion of the chain corresponds to 823 to 1325 (LVVNGKINNQ…EEGAAPRVNV (503 aa)). Residues 860–919 (NKKILRELKHISETGRLQVVKELGLLQREHPGIAVSVKTRQAIRTILNHSRETIHELQGA) are interacts with the S4 segment of voltage sensor domain. Positions 968–1068 (KLIDFIKARA…CETTVQVYFI (101 aa)) are cNMP-binding domain. Gly1043 contacts 3',5'-cyclic AMP. 3',5'-cyclic GMP-binding residues include Gly1043, Glu1044, and Met1045. 4 residues coordinate 3',5'-cyclic AMP: Met1045, Gly1046, Arg1053, and Asn1054. 2 residues coordinate 3',5'-cyclic GMP: Arg1053 and Asn1054. The segment at 1237–1325 (MLSRKSSGAA…EEGAAPRVNV (89 aa)) is disordered. A compositionally biased stretch (low complexity) spans 1266 to 1280 (VSPSVPTKTTPKPKS).

It belongs to the monovalent cation:proton antiporter 1 (CPA1) transporter (TC 2.A.36) family. As to quaternary structure, homodimer; the dimerization is stabilized in the presence of phosphatidic acids.

The protein localises to the cell projection. Its subcellular location is the cilium. The protein resides in the flagellum membrane. It catalyses the reaction Na(+)(in) + H(+)(out) = Na(+)(out) + H(+)(in). With respect to regulation, gated by voltage and stimulated by cyclic nucleotides which shift the activation voltage closer to resting membrane potential. Not inhibited by common sodium:proton exchanger inhibitors such as amiloride. Its function is as follows. Electroneutral sodium:proton antiporter that regulates intracellular pH of sperm along with capacitation and fertility. Activated in response to egg-derived chemoattractants, couples membrane voltage to sodium:proton exchange and transduces membrane hyperpolarization to cytoplasmic alkalization to cAMP signaling and ultimately to sperm motility. The polypeptide is Sperm-specific sodium:proton exchanger (Strongylocentrotus purpuratus (Purple sea urchin)).